Here is a 315-residue protein sequence, read N- to C-terminus: Phosphatidylglycerol--prolipoprotein diacylglyceryl transferase (315 aa).

A run of 2 helical transmembrane segments spans residues 19–39 (FTIH…VWIL) and 93–113 (VWEG…VAFL). An a 1,2-diacyl-sn-glycero-3-phospho-(1'-sn-glycerol)-binding site is contributed by Arg141. 2 consecutive transmembrane segments (helical) span residues 188–208 (LFHP…ALII) and 256–276 (VWTA…LYQY).

This sequence belongs to the Lgt family.

The protein resides in the cell membrane. It catalyses the reaction L-cysteinyl-[prolipoprotein] + a 1,2-diacyl-sn-glycero-3-phospho-(1'-sn-glycerol) = an S-1,2-diacyl-sn-glyceryl-L-cysteinyl-[prolipoprotein] + sn-glycerol 1-phosphate + H(+). It functions in the pathway protein modification; lipoprotein biosynthesis (diacylglyceryl transfer). Functionally, catalyzes the transfer of the diacylglyceryl group from phosphatidylglycerol to the sulfhydryl group of the N-terminal cysteine of a prolipoprotein, the first step in the formation of mature lipoproteins. The polypeptide is Phosphatidylglycerol--prolipoprotein diacylglyceryl transferase (Bifidobacterium longum (strain DJO10A)).